The following is a 324-amino-acid chain: Testisin (324 aa).

Residues 1–21 (MGARGKTLVPLLVVVATAAMA) form the signal peptide. Positions 22 to 54 (LQSTYLQVDPEKPELQEPDLLSGPCGHRTIPSR) are excised as a propeptide. Disulfide bonds link C46-C167 and C80-C96. The region spanning 55–296 (IVGGDDAELG…HYNWIQSTMI (242 aa)) is the Peptidase S1 domain. Catalysis depends on charge relay system residues H95 and D147. N-linked (GlcNAc...) asparagine glycosylation is found at N170, N177, and N210. Intrachain disulfides connect C181–C254, C214–C233, and C244–C272. S248 (charge relay system) is an active-site residue. An N-linked (GlcNAc...) asparagine glycan is attached at N283. N298 is lipidated: GPI-anchor amidated asparagine. A propeptide spans 299 to 324 (GLLRPDPVPLLLFLTLAWASSLLRPA) (removed in mature form).

Belongs to the peptidase S1 family. As to expression, testis.

Its subcellular location is the cell membrane. In terms of biological role, could regulate proteolytic events associated with testicular germ cell maturation. This is Testisin (Prss21) from Mus musculus (Mouse).